The sequence spans 336 residues: Probable long-chain-alcohol O-fatty-acyltransferase 8 (336 aa).

The next 8 membrane-spanning stretches (helical) occupy residues 7–27 (SFVK…YIPS), 38–58 (SVLP…FTIF), 59–79 (SSTT…LFAF), 82–102 (GPLL…CLPI), 117–135 (WVFF…VHNY), 152–172 (LYLV…IILG), 228–248 (MGCW…YFYI), and 284–304 (PMLS…FLFF).

This sequence belongs to the wax synthase family.

The protein resides in the membrane. The catalysed reaction is a long chain fatty alcohol + a fatty acyl-CoA = a wax ester + CoA. Functionally, catalyzes the final step in the synthesis of long-chain linear esters (waxes). This chain is Probable long-chain-alcohol O-fatty-acyltransferase 8, found in Arabidopsis thaliana (Mouse-ear cress).